Consider the following 340-residue polypeptide: Glyceraldehyde-3-phosphate dehydrogenase (340 aa).

Residues 11-12 (TI) and Gly-109 each bind NAD(+). 138–140 (SCN) is a binding site for D-glyceraldehyde 3-phosphate. The active-site Nucleophile is the Cys-139. NAD(+) is bound at residue Arg-167. D-glyceraldehyde 3-phosphate is bound at residue 193–194 (HA). Gln-300 provides a ligand contact to NAD(+).

It belongs to the glyceraldehyde-3-phosphate dehydrogenase family. As to quaternary structure, homotetramer.

The protein localises to the cytoplasm. The enzyme catalyses D-glyceraldehyde 3-phosphate + phosphate + NADP(+) = (2R)-3-phospho-glyceroyl phosphate + NADPH + H(+). It catalyses the reaction D-glyceraldehyde 3-phosphate + phosphate + NAD(+) = (2R)-3-phospho-glyceroyl phosphate + NADH + H(+). The protein operates within carbohydrate degradation; glycolysis; pyruvate from D-glyceraldehyde 3-phosphate: step 1/5. This Saccharolobus islandicus (strain L.S.2.15 / Lassen #1) (Sulfolobus islandicus) protein is Glyceraldehyde-3-phosphate dehydrogenase.